The sequence spans 423 residues: UPF0597 protein Emin_0811 (423 aa).

This sequence belongs to the UPF0597 family.

The polypeptide is UPF0597 protein Emin_0811 (Elusimicrobium minutum (strain Pei191)).